The sequence spans 910 residues: Triacylglycerol lipase 4 (910 aa).

The span at 51-66 (SKDNSDVERVEEDAGK) shows a compositional bias: basic and acidic residues. The segment at 51–120 (SKDNSDVERV…TDEGEDERQG (70 aa)) is disordered. Ser-55 is modified (phosphoserine). The span at 70–85 (TGKNKTTNKVNFNLDT) shows a compositional bias: polar residues. Residues 90 to 116 (KLDDDQETVTENENNDIEMVETDEGED) show a composition bias toward acidic residues. Residues 282–483 (LVLSGGGTFG…DNDLPISRLS (202 aa)) enclose the PNPLA domain. The GXGXXG motif lies at 286-291 (GGGTFG). A GXSXG motif is present at residues 313–317 (GSSAG). The active-site Nucleophile is the Ser-315. Catalysis depends on Asp-470, which acts as the Proton acceptor. 2 disordered regions span residues 657–683 (EQTS…DNHI) and 713–777 (SPSG…PILQ). Over residues 666–683 (PENSTLLTRTPTKGDNHI) the composition is skewed to polar residues. Thr-675 bears the Phosphothreonine; by Cdk1 mark. Phosphoserine is present on residues Ser-737, Ser-749, Ser-751, and Ser-836. Polar residues predominate over residues 739–768 (TISTSRRPAKSFSFSVASPTSRMLRQSSKI). The interval 874–910 (RRHSIDGRPPSQATKSSPFRSRPSSSTQHKSTTSFTQ) is disordered. Positions 889-899 (SSPFRSRPSSS) are enriched in low complexity. Ser-890 bears the Phosphoserine; by Cdk1 mark. The segment covering 900–910 (TQHKSTTSFTQ) has biased composition (polar residues).

Post-translationally, phosphorylation at Thr-675 and Ser-890 by Cdk1/CDC28 stimulates enzyme activity in vivo.

It localises to the lipid droplet. It catalyses the reaction a triacylglycerol + H2O = a diacylglycerol + a fatty acid + H(+). It carries out the reaction 1,2,3-tri-(9Z-octadecenoyl)-glycerol + H2O = di-(9Z)-octadecenoylglycerol + (9Z)-octadecenoate + H(+). The catalysed reaction is 1,2-dihexadecanoyl-sn-glycero-3-phosphocholine + H2O = 1-hexadecanoyl-sn-glycero-3-phosphocholine + hexadecanoate + H(+). The enzyme catalyses cholesteryl (9Z-octadecenoate) + H2O = cholesterol + (9Z)-octadecenoate + H(+). It catalyses the reaction 1-(9Z-octadecenoyl)-sn-glycero-3-phosphate + (9Z)-octadecenoyl-CoA = 1,2-di-(9Z-octadecenoyl)-sn-glycero-3-phosphate + CoA. Its activity is regulated as follows. Phosphorylated and activated by cyclin-dependent kinase 1 (Cdk1/CDC28). Loses its lipolytic activity in cells lacking nonpolar lipids, but retains its side activity as lysophospholipid acyltransferase. In terms of biological role, lipid particle-localized triacylglycerol (TAG) lipase. The lipid droplet/particle is a lipid storage compartment which serves as a depot of energy and building blocks for membrane lipid biosynthesis. Involved in the mobilization of the non-polar storage lipids triacylglycerols (TAGs) from lipid particles by hydrolysis of TAGs, releasing and supplying specific fatty acids to the appropriate metabolic pathways. Also has steryl ester (SE) hydrolase and phospholipase A(2) (PLA(2)) activities, and catalyzes the acylation of lysophosphatidic acid (LPA). Contributes to early bud formation in late G1 phase of the cell cycle upon phosphorylation and activation by cyclin-dependent kinase 1 (Cdk1/CDC28). The chain is Triacylglycerol lipase 4 (TGL4) from Saccharomyces cerevisiae (strain ATCC 204508 / S288c) (Baker's yeast).